Reading from the N-terminus, the 335-residue chain is Glyceraldehyde-3-phosphate dehydrogenase 1 (335 aa).

Residues 12-13, D34, R78, and S120 contribute to the NAD(+) site; that span reads RI. Residues 151–153 and T182 each bind D-glyceraldehyde 3-phosphate; that span reads SCT. The active-site Nucleophile is C152. Residue N183 coordinates NAD(+). D-glyceraldehyde 3-phosphate contacts are provided by residues R197, 210 to 211, and R233; that span reads TG. Residue N315 participates in NAD(+) binding.

The protein belongs to the glyceraldehyde-3-phosphate dehydrogenase family. As to quaternary structure, homotetramer. Interacts with BrxC. In terms of processing, in response to oxidative stress, the active site Cys likely reacts with bacillithiol (BSH) to form mixed disulfides to protect the Cys residue against overoxidation. S-bacillithiolation presumably leads to loss of catalytic activity. Debacillithiolation by monothiol bacilliredoxin BrxC restores the activity.

The protein resides in the cytoplasm. It carries out the reaction D-glyceraldehyde 3-phosphate + phosphate + NAD(+) = (2R)-3-phospho-glyceroyl phosphate + NADH + H(+). The protein operates within carbohydrate degradation; glycolysis; pyruvate from D-glyceraldehyde 3-phosphate: step 1/5. In terms of biological role, involved in the glycolysis. Catalyzes the oxidative phosphorylation of glyceraldehyde 3-phosphate (G3P) to 1,3-bisphosphoglycerate (BPG) using the cofactor NAD. The first reaction step involves the formation of a hemiacetal intermediate between G3P and a cysteine residue, and this hemiacetal intermediate is then oxidized to a thioester, with concomitant reduction of NAD to NADH. The reduced NADH is then exchanged with the second NAD, and the thioester is attacked by a nucleophilic inorganic phosphate to produce BPG. The sequence is that of Glyceraldehyde-3-phosphate dehydrogenase 1 from Bacillus subtilis (strain 168).